A 388-amino-acid chain; its full sequence is Succinate--CoA ligase [ADP-forming] subunit beta (388 aa).

An ATP-grasp domain is found at 9 to 244 (KEILRKYNVP…LDEEDANEIE (236 aa)). Residues lysine 46, 53-55 (GRG), glutamate 99, alanine 102, and glutamate 107 contribute to the ATP site. Asparagine 199 and aspartate 213 together coordinate Mg(2+). Substrate is bound by residues asparagine 264 and 321–323 (GIM).

This sequence belongs to the succinate/malate CoA ligase beta subunit family. As to quaternary structure, heterotetramer of two alpha and two beta subunits. Mg(2+) is required as a cofactor.

It carries out the reaction succinate + ATP + CoA = succinyl-CoA + ADP + phosphate. It catalyses the reaction GTP + succinate + CoA = succinyl-CoA + GDP + phosphate. It participates in carbohydrate metabolism; tricarboxylic acid cycle; succinate from succinyl-CoA (ligase route): step 1/1. Succinyl-CoA synthetase functions in the citric acid cycle (TCA), coupling the hydrolysis of succinyl-CoA to the synthesis of either ATP or GTP and thus represents the only step of substrate-level phosphorylation in the TCA. The beta subunit provides nucleotide specificity of the enzyme and binds the substrate succinate, while the binding sites for coenzyme A and phosphate are found in the alpha subunit. This is Succinate--CoA ligase [ADP-forming] subunit beta from Ralstonia nicotianae (strain ATCC BAA-1114 / GMI1000) (Ralstonia solanacearum).